Reading from the N-terminus, the 81-residue chain is Small ribosomal subunit protein bS16 (81 aa).

Belongs to the bacterial ribosomal protein bS16 family.

This is Small ribosomal subunit protein bS16 from Desulfotalea psychrophila (strain LSv54 / DSM 12343).